Here is an 815-residue protein sequence, read N- to C-terminus: 1,4-alpha-glucan branching enzyme GlgB (815 aa).

The Nucleophile role is filled by Asp-405. Residue Glu-458 is the Proton donor of the active site.

This sequence belongs to the glycosyl hydrolase 13 family. GlgB subfamily. In terms of assembly, monomer.

The catalysed reaction is Transfers a segment of a (1-&gt;4)-alpha-D-glucan chain to a primary hydroxy group in a similar glucan chain.. It functions in the pathway glycan biosynthesis; glycogen biosynthesis. Functionally, catalyzes the formation of the alpha-1,6-glucosidic linkages in glycogen by scission of a 1,4-alpha-linked oligosaccharide from growing alpha-1,4-glucan chains and the subsequent attachment of the oligosaccharide to the alpha-1,6 position. The sequence is that of 1,4-alpha-glucan branching enzyme GlgB from Histophilus somni (strain 2336) (Haemophilus somnus).